A 153-amino-acid polypeptide reads, in one-letter code: uncharacterized protein (153 aa).

An N-acetylalanine modification is found at A2.

This is an uncharacterized protein from Arabidopsis thaliana (Mouse-ear cress).